Reading from the N-terminus, the 87-residue chain is Small ribosomal subunit protein uS17 (87 aa).

Belongs to the universal ribosomal protein uS17 family. As to quaternary structure, part of the 30S ribosomal subunit.

Its function is as follows. One of the primary rRNA binding proteins, it binds specifically to the 5'-end of 16S ribosomal RNA. This chain is Small ribosomal subunit protein uS17, found in Bacillus mycoides (strain KBAB4) (Bacillus weihenstephanensis).